The primary structure comprises 578 residues: Acyl-CoA ligase AKT1 (578 aa).

ATP contacts are provided by residues 210-218 (SSGTSGAQK), 350-355 (QCYGAT), Asp-438, Arg-457, and Lys-554. The SBD1 stretch occupies residues 281-350 (DVEDLLSIVE…RHHPTWKTKQ (70 aa)). Residues 351–413 (CYGATEAGTA…VSSPSLAIGY (63 aa)) form an SBD2 region. Positions 576–578 (SKI) match the Peroxisomal targeting signal type 1 motif.

It localises to the peroxisome. The protein operates within mycotoxin biosynthesis. Functionally, acyl-CoA ligase; part of the gene clusters that mediate the biosynthesis of the host-selective toxins (HSTs) AK-toxins responsible for Japanese pear black spot disease by the Japanese pear pathotype. AK-toxins are esters of 9,10-epoxy 8-hydroxy 9-methyldecatrienoic acid (EDA). On cellular level, AK-toxins affect plasma membrane of susceptible cells and cause a sudden increase in loss of K(+) after a few minutes of toxin treatment. The acyl-CoA ligase AKT1, the hydrolase AKT2 and enoyl-CoA hydratase AKT3 are all involved in the biosynthesis of the AK-, AF- and ACT-toxin common 9,10-epoxy-8-hydroxy-9-methyl-decatrienoic acid (EDA) structural moiety. Part of the EDA biosynthesis occurs in the peroxisome since these 3 enzymes are localized in peroxisomes. The exact roles of the 3 enzymes, as well as of additional AK-toxin clusters enzymes, including AKT4, AKT6 and AKTS1, have still to be elucidated. The Cytochrome P450 monooxygenase AKT7 on the other side functions to limit production of EDA and AK-toxin, probably via the catalysis of a side reaction of EDA or its precursor. This chain is Acyl-CoA ligase AKT1, found in Alternaria alternata (Alternaria rot fungus).